Reading from the N-terminus, the 504-residue chain is Hexokinase-10 (504 aa).

A helical transmembrane segment spans residues 7 to 29 (GWVRVAAVGWAVAACAVAAGMVA). Positions 39-493 (NRAVAVVRDL…SGTGAALLAA (455 aa)) constitute a Hexokinase domain. A hexokinase small subdomain region spans residues 94-226 (DGSEEGISYA…GLNMKVNVLV (133 aa)). ADP is bound by residues G108 and T109. D-glucose-binding residues include T192, K193, N227, N254, E282, and E313. The hexokinase large subdomain stretch occupies residues 227 to 482 (NNTVGTLALG…ATVSLRVMEE (256 aa)). G447 contacts ADP.

The protein belongs to the hexokinase family. Expressed specifically in stamen.

The protein localises to the plastid. It localises to the chloroplast outer membrane. It carries out the reaction a D-hexose + ATP = a D-hexose 6-phosphate + ADP + H(+). The enzyme catalyses D-fructose + ATP = D-fructose 6-phosphate + ADP + H(+). It catalyses the reaction D-glucose + ATP = D-glucose 6-phosphate + ADP + H(+). It participates in carbohydrate metabolism; hexose metabolism. Its pathway is carbohydrate degradation; glycolysis; D-glyceraldehyde 3-phosphate and glycerone phosphate from D-glucose: step 1/4. Functionally, fructose and glucose phosphorylating enzyme. The chain is Hexokinase-10 (HXK10) from Oryza sativa subsp. japonica (Rice).